Reading from the N-terminus, the 309-residue chain is Putative G-protein coupled receptor B0244.4 (309 aa).

Helical transmembrane passes span 39–59, 82–102, 114–134, 162–182, 204–224, and 256–276; these read SIIF…ACFL, YIFM…MLAL, IYFL…GSYV, FAIA…MFQA, IMLV…SFVL, and WTLF…FYLV.

Belongs to the G-protein coupled receptor 1 family. B0244 subfamily.

It localises to the cell membrane. In Caenorhabditis elegans, this protein is Putative G-protein coupled receptor B0244.4.